Reading from the N-terminus, the 338-residue chain is Phosphate acyltransferase (338 aa).

It belongs to the PlsX family. Homodimer. Probably interacts with PlsY.

The protein resides in the cytoplasm. It catalyses the reaction a fatty acyl-[ACP] + phosphate = an acyl phosphate + holo-[ACP]. The protein operates within lipid metabolism; phospholipid metabolism. Catalyzes the reversible formation of acyl-phosphate (acyl-PO(4)) from acyl-[acyl-carrier-protein] (acyl-ACP). This enzyme utilizes acyl-ACP as fatty acyl donor, but not acyl-CoA. The polypeptide is Phosphate acyltransferase (Mannheimia succiniciproducens (strain KCTC 0769BP / MBEL55E)).